The sequence spans 573 residues: Putative cytochrome c oxidase subunit 1-beta (573 aa).

Residues 53-73 (VIGHLYLATSFGFFLLGGVLA) traverse the membrane as a helical segment. His100 contacts Fe(II)-heme a. The next 6 membrane-spanning stretches (helical) occupy residues 103-123 (IMML…IMPL), 141-161 (WMYL…GGAA), 188-208 (GLVV…STII), 227-247 (ILFT…ALLM), 272-292 (LFWF…FGIV), and 304-324 (IFGY…SAVV). Cu cation-binding residues include His278 and Tyr282. The segment at residues 278 to 282 (HPEVY) is a cross-link (1'-histidyl-3'-tyrosine (His-Tyr)). Cu cation contacts are provided by His327 and His328. The next 2 helical transmembrane spans lie at 329-349 (MFAT…LIAV) and 373-393 (MLWA…GVLI). A heme a3-binding site is contributed by His411. Transmembrane regions (helical) follow at residues 412-432 (LHYV…YFWW), 447-467 (IHFW…HWLG), and 490-510 (ISSI…YNVW). His413 provides a ligand contact to Fe(II)-heme a.

It belongs to the heme-copper respiratory oxidase family. Associates with subunits II, III and IV to form cytochrome c oxidase. Cu(2+) serves as cofactor. The cofactor is heme.

It is found in the cell membrane. The enzyme catalyses 4 Fe(II)-[cytochrome c] + O2 + 8 H(+)(in) = 4 Fe(III)-[cytochrome c] + 2 H2O + 4 H(+)(out). It participates in energy metabolism; oxidative phosphorylation. Cytochrome c oxidase is the component of the respiratory chain that catalyzes the reduction of oxygen to water. Subunits 1-3 form the functional core of the enzyme complex. CO I is the catalytic subunit of the enzyme. Electrons originating in cytochrome c are transferred via the copper A center of subunit 2 and heme A of subunit 1 to the bimetallic center formed by heme A3 and copper B. In Streptomyces coelicolor (strain ATCC BAA-471 / A3(2) / M145), this protein is Putative cytochrome c oxidase subunit 1-beta (ctaD2).